Here is a 1201-residue protein sequence, read N- to C-terminus: Period circadian protein homolog 3 (1201 aa).

The interval 1–50 (MPRGEAPGPGRRGAKDEALGEESGERWSPEFHLQRKLADSSHSEQQDRNR) is disordered. Residues 13-50 (GAKDEALGEESGERWSPEFHLQRKLADSSHSEQQDRNR) are compositionally biased toward basic and acidic residues. The Nuclear export signal 1 motif lies at 55-64 (LIMVVQEMKK). 2 PAS domains span residues 121 to 188 (IASE…RAQL) and 262 to 328 (YEAP…KVLK). One can recognise a PAC domain in the interval 337 to 380 (HSPIRFCTQNGDYIILDSSWSSFVNPWSRKISFIIGRHKVRTSP). Positions 403-412 (LQEQIYKLLL) match the Nuclear export signal 3 motif. Residues 555–760 (LKRKCISCTN…SSSNTGSGPR (206 aa)) form a CSNK1E binding domain region. Disordered regions lie at residues 717–788 (YSYF…FPPA) and 881–923 (PSMS…RSSS). Polar residues predominate over residues 721-731 (QGDSTSKQTRS). The Nuclear localization signal signature appears at 729 to 745 (TRSAGCRKGKHKRKKLP). Over residues 733-743 (GCRKGKHKRKK) the composition is skewed to basic residues. 2 stretches are compositionally biased toward low complexity: residues 767–783 (AQPCCPSAASSPHTSSP) and 881–890 (PSMSSAMSPT). Residues 900–911 (QRREEEKWEAQS) show a composition bias toward basic and acidic residues. Ser919 is subject to Phosphoserine. A Nuclear export signal 2 motif is present at residues 925–932 (LQLNLLQE). Residues 952–1067 (TEYCVTGNNG…GSAASGSSDS (116 aa)) form a disordered region. 4 stretches are compositionally biased toward polar residues: residues 957–976 (TGNNGSESSPATTGALSTGS), 983–994 (SHPTASALSTGS), 1001–1012 (SHPTASALSTGS), and 1035–1050 (TPSHPTATVLSTGSPP). Repeat copies occupy residues 965 to 982 (SPATTGALSTGSPPRENP), 983 to 1000 (SHPTASALSTGSPPMKNP), 1001 to 1018 (SHPTASALSTGSPPMKNP), 1019 to 1036 (SHPTASTLSMGLPPSRTP), and 1037 to 1054 (SHPTATVLSTGSPPSESP). The interval 965–1054 (SPATTGALST…STGSPPSESP (90 aa)) is 5 X 18 AA tandem repeats of S-[HP]-[AP]-T-[AT]-[GST]-[ATV]-L-S-[MT]-G-[LS]-P-P-[MRS]-[EKR]-[NST]-P. Ser994 carries the post-translational modification Phosphoserine. The residue at position 1053 (Ser1053) is a Phosphoserine. The segment covering 1053-1067 (SPSRTGSAASGSSDS) has biased composition (low complexity). Residues 1123–1201 (ERVKEVVLKE…CGQVLVEDSC (79 aa)) are CRY binding domain.

In terms of assembly, homodimer. Component of the circadian core oscillator, which includes the CRY proteins, CLOCK or NPAS2, BMAL1 or BMAL2, CSNK1D and/or CSNK1E, TIMELESS and the PER proteins. Interacts directly with PER1, PER2, CRY1, CRY2, and TIMELESS; interaction with CRY1 and CRY2 is weak and not rhythmic. Interacts with FBXW11 and BTRC. Phosphorylation by CSNK1E is weak and appears to require association with PER1 and translocation to the nucleus. In terms of processing, ubiquitinated.

The protein localises to the cytoplasm. The protein resides in the nucleus. Functionally, originally described as a core component of the circadian clock. The circadian clock, an internal time-keeping system, regulates various physiological processes through the generation of approximately 24 hour circadian rhythms in gene expression, which are translated into rhythms in metabolism and behavior. It is derived from the Latin roots 'circa' (about) and 'diem' (day) and acts as an important regulator of a wide array of physiological functions including metabolism, sleep, body temperature, blood pressure, endocrine, immune, cardiovascular, and renal function. Consists of two major components: the central clock, residing in the suprachiasmatic nucleus (SCN) of the brain, and the peripheral clocks that are present in nearly every tissue and organ system. Both the central and peripheral clocks can be reset by environmental cues, also known as Zeitgebers (German for 'timegivers'). The predominant Zeitgeber for the central clock is light, which is sensed by retina and signals directly to the SCN. The central clock entrains the peripheral clocks through neuronal and hormonal signals, body temperature and feeding-related cues, aligning all clocks with the external light/dark cycle. Circadian rhythms allow an organism to achieve temporal homeostasis with its environment at the molecular level by regulating gene expression to create a peak of protein expression once every 24 hours to control when a particular physiological process is most active with respect to the solar day. Transcription and translation of core clock components (CLOCK, NPAS2, BMAL1, BMAL2, PER1, PER2, PER3, CRY1 and CRY2) plays a critical role in rhythm generation, whereas delays imposed by post-translational modifications (PTMs) are important for determining the period (tau) of the rhythms (tau refers to the period of a rhythm and is the length, in time, of one complete cycle). A diurnal rhythm is synchronized with the day/night cycle, while the ultradian and infradian rhythms have a period shorter and longer than 24 hours, respectively. Disruptions in the circadian rhythms contribute to the pathology of cardiovascular diseases, cancer, metabolic syndromes and aging. A transcription/translation feedback loop (TTFL) forms the core of the molecular circadian clock mechanism. Transcription factors, CLOCK or NPAS2 and BMAL1 or BMAL2, form the positive limb of the feedback loop, act in the form of a heterodimer and activate the transcription of core clock genes and clock-controlled genes (involved in key metabolic processes), harboring E-box elements (5'-CACGTG-3') within their promoters. The core clock genes: PER1/2/3 and CRY1/2 which are transcriptional repressors form the negative limb of the feedback loop and interact with the CLOCK|NPAS2-BMAL1|BMAL2 heterodimer inhibiting its activity and thereby negatively regulating their own expression. This heterodimer also activates nuclear receptors NR1D1, NR1D2, RORA, RORB and RORG, which form a second feedback loop and which activate and repress BMAL1 transcription, respectively. Has a redundant role with the other PER proteins PER1 and PER2 and is not essential for the circadian rhythms maintenance. In contrast, plays an important role in sleep-wake timing and sleep homeostasis probably through the transcriptional regulation of sleep homeostasis-related genes, without influencing circadian parameters. Can bind heme. The chain is Period circadian protein homolog 3 (PER3) from Homo sapiens (Human).